Consider the following 319-residue polypeptide: HTH-type transcriptional regulator YidZ (319 aa).

In terms of domain architecture, HTH lysR-type spans 8–65; that stretch reads LDLNLLLCLQLLMQERSVTKAAKRMNVTPSAVSKSLAKLRAWFDDPLFVNSPLGLSPT. The segment at residues 25–44 is a DNA-binding region (H-T-H motif); that stretch reads VTKAAKRMNVTPSAVSKSLA.

It belongs to the LysR transcriptional regulatory family.

Functionally, involved in anaerobic NO protection. This chain is HTH-type transcriptional regulator YidZ, found in Escherichia coli O139:H28 (strain E24377A / ETEC).